A 343-amino-acid chain; its full sequence is MWPNGSSLGPCFRPTNITLEERRLIASPWFAASFCVVGLASNLLALSVLAGARQGGSHTRSSFLTFLCGLVLTDFLGLLVTGAIVVSQHAALFEWHAVDPGCRLCRFMGVVMIFFGLSPLLLGATMASERFLGITRPFSRPVVTSQRRAWATVGLVWAAALALGLLPLLGLGRYTVQYPGSWCFLTLGAESGDVAFGLLFSMLGGLSVGLSFLLNTVSVATLCHVYHGQEAAQQRPRDSEVEMMAQLLGIMLVASVCWLPLLVFIAQTVLRNPPAMSPSGQLSRATEQELLIYLRVATWNQILDPWVYILFRRAVLRRLQPRLSTRPRSLSLQPQLTQRSGLQ.

Residues 1–29 (MWPNGSSLGPCFRPTNITLEERRLIASPW) are Extracellular-facing. 2 N-linked (GlcNAc...) asparagine glycosylation sites follow: Asn-4 and Asn-16. Residues 30–52 (FAASFCVVGLASNLLALSVLAGA) traverse the membrane as a helical segment. Residues 53–66 (RQGGSHTRSSFLTF) are Cytoplasmic-facing. The chain crosses the membrane as a helical span at residues 67–87 (LCGLVLTDFLGLLVTGAIVVS). Over 88–106 (QHAALFEWHAVDPGCRLCR) the chain is Extracellular. Cys-105 and Cys-183 form a disulfide bridge. The chain crosses the membrane as a helical span at residues 107–128 (FMGVVMIFFGLSPLLLGATMAS). Residues 129–149 (ERFLGITRPFSRPVVTSQRRA) lie on the Cytoplasmic side of the membrane. A helical membrane pass occupies residues 150–172 (WATVGLVWAAALALGLLPLLGLG). Residues 173–193 (RYTVQYPGSWCFLTLGAESGD) are Extracellular-facing. The chain crosses the membrane as a helical span at residues 194 to 219 (VAFGLLFSMLGGLSVGLSFLLNTVSV). Topologically, residues 220–246 (ATLCHVYHGQEAAQQRPRDSEVEMMAQ) are cytoplasmic. A helical membrane pass occupies residues 247–270 (LLGIMLVASVCWLPLLVFIAQTVL). At 271–289 (RNPPAMSPSGQLSRATEQE) the chain is on the extracellular side. Residues 290–311 (LLIYLRVATWNQILDPWVYILF) traverse the membrane as a helical segment. At 312–343 (RRAVLRRLQPRLSTRPRSLSLQPQLTQRSGLQ) the chain is on the cytoplasmic side. A phosphoserine mark is found at Ser-329 and Ser-331.

It belongs to the G-protein coupled receptor 1 family. Interacts with RPGRIP1L. Interacts with RACK1; the interaction regulates TBXA2R cell surface expression.

Its subcellular location is the cell membrane. In terms of biological role, receptor for thromboxane A2 (TXA2), a potent stimulator of platelet aggregation. The activity of this receptor is mediated by a G-protein that activates a phosphatidylinositol-calcium second messenger system. In the kidney, the binding of TXA2 to glomerular TP receptors causes intense vasoconstriction. Activates phospholipase C and adenylyl cyclase. This is Thromboxane A2 receptor (TBXA2R) from Chlorocebus aethiops (Green monkey).